The chain runs to 348 residues: Ileal sodium/bile acid cotransporter (348 aa).

Over 1–28 (MDNSSVCPPNATVCEGDSCVVPESNFNA) the chain is Extracellular. N-linked (GlcNAc...) asparagine glycosylation is found at Asn3 and Asn10. A helical transmembrane segment spans residues 29 to 49 (ILNTVMSTVLTILLAMVMFSM). Over 50 to 87 (GCNVEVHKFLGHIKRPWGIFVGFLCQFGIMPLTGFILS) the chain is Cytoplasmic. The helical transmembrane segment at 88 to 108 (VASGILPVQAVVVLIMGCCPG) threads the bilayer. Residues 109–126 (GTGSNILAYWIDGDMDLS) are Extracellular-facing. Residues 127-147 (VSMTTCSTLLALGMMPLCLFV) traverse the membrane as a helical segment. Topologically, residues 148 to 157 (YTKMWVDSGT) are cytoplasmic. Residues 158-178 (IVIPYDSIGISLVALVIPVSF) form a helical membrane-spanning segment. The Extracellular portion of the chain corresponds to 179 to 195 (GMFVNHKWPQKAKIILK). The chain crosses the membrane as a helical span at residues 196 to 216 (IGSITGVILIVLIAVIGGILY). At 217-224 (QSAWIIEP) the chain is on the cytoplasmic side. The chain crosses the membrane as a helical span at residues 225-245 (KLWIIGTIFPIAGYSLGFFLA). Residues 246 to 284 (RLAGQPWYRCRTVALETGMQNTQLCSTIVQLSFSPEDLN) lie on the Extracellular side of the membrane. The helical transmembrane segment at 285–305 (LVFTFPLIYTVFQLVFAAVIL) threads the bilayer. At 306-348 (GIYVTYRKCYGKNDAEFLEKTDNEMDSRPSFDETNKGFQPDEK) the chain is on the cytoplasmic side. Residues 328-348 (NEMDSRPSFDETNKGFQPDEK) are disordered. Ser335 carries the phosphoserine modification.

Belongs to the bile acid:sodium symporter (BASS) (TC 2.A.28) family. As to quaternary structure, monomer and homodimer. In terms of tissue distribution, expressed in ileum.

The protein resides in the membrane. It carries out the reaction taurocholate(out) + 2 Na(+)(out) = taurocholate(in) + 2 Na(+)(in). It catalyses the reaction cholate(out) + 2 Na(+)(out) = cholate(in) + 2 Na(+)(in). The enzyme catalyses taurochenodeoxycholate(out) + 2 Na(+)(out) = taurochenodeoxycholate(in) + 2 Na(+)(in). The catalysed reaction is tauroursodeoxycholate(out) + 2 Na(+)(out) = tauroursodeoxycholate(in) + 2 Na(+)(in). It carries out the reaction glycocholate(out) + 2 Na(+)(out) = glycocholate(in) + 2 Na(+)(in). It catalyses the reaction tauronorcholate(out) + 2 Na(+)(out) = tauronorcholate(in) + 2 Na(+)(in). The enzyme catalyses tauroallocholate(out) + 2 Na(+)(out) = tauroallocholate(in) + 2 Na(+)(in). The catalysed reaction is taurodeoxycholate(out) + 2 Na(+)(out) = taurodeoxycholate(in) + 2 Na(+)(in). It carries out the reaction tauro-beta-muricholate(out) + 2 Na(+)(out) = tauro-beta-muricholate(in) + 2 Na(+)(in). Plays a critical role in the sodium-dependent reabsorption of bile acids from the lumen of the small intestine. Transports various bile acids, unconjugated or conjugated, such as cholate and taurocholate. Also responsible for bile acid transport in the renal proximal tubules, a salvage mechanism that helps conserve bile acids. Works collaboratively with the Na(+)-taurocholate cotransporting polypeptide (NTCP), the organic solute transporter (OST), and the bile salt export pump (BSEP), to ensure efficacious biological recycling of bile acids during enterohepatic circulation. This chain is Ileal sodium/bile acid cotransporter (Slc10a2), found in Mus musculus (Mouse).